The primary structure comprises 319 residues: MSLNFLDFEQPIAELEAKIDSLTAVSRQDEKLDINIDEEVHRLREKSVELTRKIFADLGAWQVAQLARHPRRPYTLDYVRLAFDEFDELAGDRAYADDKAIVGGIARLDGRPVMIIGHQKGRETKEKIRRNFGMPAPEGYRKALRLMEMAERFKMPIITFIDTPGAYPGVGAEERGQSEAIARNLREMSRLSVPVICTVIGEGGSGGALAIGVGDKVNMLQYSTYSVISPEGCASILWKSADKAPLAAEAMGIVAPRLKELKLIDSIVQEPLGGAHRNPEAMAASLKAQLLADLADLDLLSEEELLNRRYQRLMSYGYA.

The CoA carboxyltransferase C-terminal domain occupies 35–296 (NIDEEVHRLR…KAQLLADLAD (262 aa)).

This sequence belongs to the AccA family. Acetyl-CoA carboxylase is a heterohexamer composed of biotin carboxyl carrier protein (AccB), biotin carboxylase (AccC) and two subunits each of ACCase subunit alpha (AccA) and ACCase subunit beta (AccD).

It is found in the cytoplasm. It carries out the reaction N(6)-carboxybiotinyl-L-lysyl-[protein] + acetyl-CoA = N(6)-biotinyl-L-lysyl-[protein] + malonyl-CoA. The protein operates within lipid metabolism; malonyl-CoA biosynthesis; malonyl-CoA from acetyl-CoA: step 1/1. Its function is as follows. Component of the acetyl coenzyme A carboxylase (ACC) complex. First, biotin carboxylase catalyzes the carboxylation of biotin on its carrier protein (BCCP) and then the CO(2) group is transferred by the carboxyltransferase to acetyl-CoA to form malonyl-CoA. This chain is Acetyl-coenzyme A carboxylase carboxyl transferase subunit alpha, found in Klebsiella pneumoniae (strain 342).